Consider the following 407-residue polypeptide: Myeloid cell nuclear differentiation antigen (407 aa).

Residues 1–88 form the Pyrin domain; the sequence is MVNEYKKILL…VNNLRKEKSK (88 aa). Positions 108–207 are disordered; sequence EVGLAAPAPT…RQVDARRNVP (100 aa). Residues 131–137 carry the Nuclear localization signal motif; sequence PVAQKRK. Positions 139-148 are enriched in basic and acidic residues; sequence PNKEKTEAKR. A compositionally biased stretch (low complexity) spans 177–190; that stretch reads QTSSSTPSNTSFTP. An HIN-200 domain is found at 196-394; it reads AQRQVDARRN…CGSHSFIKVI (199 aa).

Participates in a ternary complex with YY1 and the YY1 target DNA element. Binds nucleolin and nucleophosmin/NPM/B23. In terms of tissue distribution, expressed constitutively in cells of the myeloid lineage. Found in promyelocyte stage cells as well as in all other stage cells including peripheral blood monocytes and granulocytes. Also appears in myeloblast cells in some cases of acute myeloid Leukemia.

It localises to the nucleus. It is found in the cytoplasm. Functionally, may act as a transcriptional activator/repressor in the myeloid lineage. Plays a role in the granulocyte/monocyte cell-specific response to interferon. Stimulates the DNA binding of the transcriptional repressor protein YY1. The chain is Myeloid cell nuclear differentiation antigen (MNDA) from Homo sapiens (Human).